The following is a 526-amino-acid chain: Arylsulfatase G (526 aa).

An N-terminal signal peptide occupies residues 1–16; sequence MGWLFLKVLLVGMVFS. D44, D45, and C84 together coordinate Ca(2+). C84 acts as the Nucleophile in catalysis. Residue C84 is modified to 3-oxoalanine (Cys). An N-linked (GlcNAc...) asparagine glycan is attached at N117. K137 provides a ligand contact to substrate. Residue H139 is part of the active site. S162 is a binding site for substrate. N215 carries an N-linked (GlcNAc...) asparagine glycan. H251 serves as a coordination point for substrate. Residues D302 and N303 each coordinate Ca(2+). N-linked (GlcNAc...) asparagine glycosylation is found at N356 and N497.

This sequence belongs to the sulfatase family. Ca(2+) is required as a cofactor. Post-translationally, N-glycosylated with both high mannose and complex type sugars. In terms of processing, the conversion to 3-oxoalanine (also known as C-formylglycine, FGly), of a serine or cysteine residue in prokaryotes and of a cysteine residue in eukaryotes, is critical for catalytic activity. 63-kDa precursor undergoes proteolytic processing in two steps, yielding two fragments in the first step (apparent molecular masses of 44 and 18 kDa). In the second step, the 44-kDa fragment is processed further to the 34- and 10-kDa chains. The 10-kDa chain is a cleavage product of the 44-kDa fragment but linked to the 18-kDa chain through a disulfide bridge.

The protein localises to the lysosome. It catalyses the reaction an aryl sulfate + H2O = a phenol + sulfate + H(+). It carries out the reaction Hydrolysis of the 3-sulfate groups of the N-sulfo-D-glucosamine 3-O-sulfate units of heparin.. Functionally, displays arylsulfatase activity at acidic pH towards the artificial substrate p-nitrocatechol sulfate. Catalyzes the hydrolysis of the 3-sulfate groups of the N-sulfo-D-glucosamine 3-O-sulfate units of heparin. In Rattus norvegicus (Rat), this protein is Arylsulfatase G (Arsg).